A 584-amino-acid chain; its full sequence is ATP-dependent RNA helicase MRH4, mitochondrial (584 aa).

The N-terminal 49 residues, 1–49 (MQPVFSRFPYASKSGFISLASRGYAVSRNSGSSIKSNLRSKPRADTRWN), are a transit peptide targeting the mitochondrion. Residues 28–39 (RNSGSSIKSNLR) are compositionally biased toward polar residues. Positions 28–92 (RNSGSSIKSN…QTQQQFQYGE (65 aa)) are disordered. Positions 63-79 (GKGDHRSHSRSDSRAKP) are enriched in basic and acidic residues. The Q motif signature appears at 162–169 (HLKPSPIQ). The region spanning 179-366 (TLMDPQLQVR…TRLFPTVGVI (188 aa)) is the Helicase ATP-binding domain. 192–199 (AETGSGKT) serves as a coordination point for ATP. The DEAD box signature appears at 314 to 317 (DEAD). Residues 397–584 (ALAQILYSIN…SIVSKNVSIS (188 aa)) form the Helicase C-terminal domain.

Belongs to the DEAD box helicase family. MRH4 subfamily.

Its subcellular location is the mitochondrion. It carries out the reaction ATP + H2O = ADP + phosphate + H(+). ATP-binding RNA helicase involved in mitochondrial RNA metabolism. Required for maintenance of mitochondrial DNA. The sequence is that of ATP-dependent RNA helicase MRH4, mitochondrial (MRH4) from Kluyveromyces lactis (strain ATCC 8585 / CBS 2359 / DSM 70799 / NBRC 1267 / NRRL Y-1140 / WM37) (Yeast).